The primary structure comprises 152 residues: Melatonin receptor type 1B (152 aa).

Topologically, residues 1-12 (HSFVYEKLFSLW) are cytoplasmic. Residues 13–33 (NTILYVCLIWTLTVVATVPNF) traverse the membrane as a helical segment. The Extracellular segment spans residues 34–57 (FVGSLEYDPRIYSCTFVQTVSSSY). A helical membrane pass occupies residues 58–78 (TITVVVIHFILPITVVTFCYL). Over 79–110 (RIWILVIQVRRKVKSEFKPRMKQSDFRNFLTM) the chain is Cytoplasmic. A helical transmembrane segment spans residues 111–131 (FVVFVIFAFCWAPLNFIGLAV). Residues 132 to 144 (SINPTEVAPKIPE) are Extracellular-facing. Residues 145 to 152 (WLFVVSYF) form a helical membrane-spanning segment.

This sequence belongs to the G-protein coupled receptor 1 family.

Its subcellular location is the cell membrane. High affinity receptor for melatonin. The activity of this receptor is mediated by pertussis toxin sensitive G proteins that inhibits adenylate cyclase activity. In Xenopus laevis (African clawed frog), this protein is Melatonin receptor type 1B (mtnr1b).